The primary structure comprises 197 residues: MIGHLEGRLRHKAPDYIVIDVHGVGYIVYVPLSTFYDLPGPGDTVALNIHTHIREDAIQLYGFRTVAEKDMFLRLITVNGVGPRLAVNILSGLTPDDLHRIILQQEGFRLKSIPGVGKKIAERILLELRDKMSVKKGREAEQPAPAAESSYGDAYSALVNLGYRPAEAEKALGKAIKSLGADPPVEKLLKETLRLLA.

The domain I stretch occupies residues 1-64; the sequence is MIGHLEGRLR…EDAIQLYGFR (64 aa). The segment at 65-143 is domain II; that stretch reads TVAEKDMFLR…VKKGREAEQP (79 aa). The segment at 144–145 is flexible linker; it reads AP. Residues 146–197 form a domain III region; it reads AAESSYGDAYSALVNLGYRPAEAEKALGKAIKSLGADPPVEKLLKETLRLLA.

Belongs to the RuvA family. Homotetramer. Forms an RuvA(8)-RuvB(12)-Holliday junction (HJ) complex. HJ DNA is sandwiched between 2 RuvA tetramers; dsDNA enters through RuvA and exits via RuvB. An RuvB hexamer assembles on each DNA strand where it exits the tetramer. Each RuvB hexamer is contacted by two RuvA subunits (via domain III) on 2 adjacent RuvB subunits; this complex drives branch migration. In the full resolvosome a probable DNA-RuvA(4)-RuvB(12)-RuvC(2) complex forms which resolves the HJ.

Its subcellular location is the cytoplasm. Its function is as follows. The RuvA-RuvB-RuvC complex processes Holliday junction (HJ) DNA during genetic recombination and DNA repair, while the RuvA-RuvB complex plays an important role in the rescue of blocked DNA replication forks via replication fork reversal (RFR). RuvA specifically binds to HJ cruciform DNA, conferring on it an open structure. The RuvB hexamer acts as an ATP-dependent pump, pulling dsDNA into and through the RuvAB complex. HJ branch migration allows RuvC to scan DNA until it finds its consensus sequence, where it cleaves and resolves the cruciform DNA. The chain is Holliday junction branch migration complex subunit RuvA from Syntrophobacter fumaroxidans (strain DSM 10017 / MPOB).